The chain runs to 101 residues: Urease subunit beta (101 aa).

The protein belongs to the urease beta subunit family. In terms of assembly, heterotrimer of UreA (gamma), UreB (beta) and UreC (alpha) subunits. Three heterotrimers associate to form the active enzyme.

Its subcellular location is the cytoplasm. The enzyme catalyses urea + 2 H2O + H(+) = hydrogencarbonate + 2 NH4(+). It participates in nitrogen metabolism; urea degradation; CO(2) and NH(3) from urea (urease route): step 1/1. The polypeptide is Urease subunit beta (Cereibacter sphaeroides (strain ATCC 17025 / ATH 2.4.3) (Rhodobacter sphaeroides)).